A 407-amino-acid chain; its full sequence is GTPase Obg (407 aa).

The region spanning Met1–Leu159 is the Obg domain. A disordered region spans residues Asn127–Arg150. A compositionally biased stretch (polar residues) spans Arg129 to Pro143. The region spanning Ala160 to Glu333 is the OBG-type G domain. GTP is bound by residues Gly166–Ser173, Phe191–Val195, Asp213–Gly216, Asn283–Asp286, and Ser314–Ile316. Residues Ser173 and Thr193 each coordinate Mg(2+). The interval Val378–Asp407 is disordered. Acidic residues predominate over residues Gly385 to Pro400.

Belongs to the TRAFAC class OBG-HflX-like GTPase superfamily. OBG GTPase family. In terms of assembly, monomer. Requires Mg(2+) as cofactor.

The protein resides in the cytoplasm. Its function is as follows. An essential GTPase which binds GTP, GDP and possibly (p)ppGpp with moderate affinity, with high nucleotide exchange rates and a fairly low GTP hydrolysis rate. Plays a role in control of the cell cycle, stress response, ribosome biogenesis and in those bacteria that undergo differentiation, in morphogenesis control. This is GTPase Obg from Pseudomonas entomophila (strain L48).